The following is a 414-amino-acid chain: MAKAKNEVPAVANPDDKLKALEAARLQIEKQFGQGSLMKLGNNSAIGNIEIIPSGSILLDEALGIGGYPRGRIIEIFGPESSGKTTIALHAVAEAQKQGGIAAFIDAEHALDPQYAKALGVNIDELWVSQPDTGEQALEIAESLVRSGAVDVIVIDSVAALTPQAEIAGEMGDSHMGLQARLMSQALRKLTAIIGKSNCMIIFINQIRMKIGVMFGSPETTTGGNALKFYASVRLDVRKIETLGKDDDEAWGNKIRVKVVKNKVAPPFRKVEMEILFGKGVCPYGSLLDSAVKQEIIGKSGSWYSYGDDKIGQGRPNAVKFLEENIDIAQKIEKELREKLFPGRPFVSSFVEKTKEQKEAQEKAVEALKKEEGSKEDALTGNKDETDDSAQKNSAASKAKRAEVVGLPADDSLF.

78–85 contributes to the ATP binding site; sequence GPESSGKT. Over residues 361 to 384 the composition is skewed to basic and acidic residues; that stretch reads QEKAVEALKKEEGSKEDALTGNKD. Residues 361–414 form a disordered region; the sequence is QEKAVEALKKEEGSKEDALTGNKDETDDSAQKNSAASKAKRAEVVGLPADDSLF.

The protein belongs to the RecA family.

The protein resides in the cytoplasm. Functionally, can catalyze the hydrolysis of ATP in the presence of single-stranded DNA, the ATP-dependent uptake of single-stranded DNA by duplex DNA, and the ATP-dependent hybridization of homologous single-stranded DNAs. It interacts with LexA causing its activation and leading to its autocatalytic cleavage. In Treponema denticola (strain ATCC 35405 / DSM 14222 / CIP 103919 / JCM 8153 / KCTC 15104), this protein is Protein RecA.